We begin with the raw amino-acid sequence, 493 residues long: 6-phosphogluconate dehydrogenase, decarboxylating (493 aa).

Residues 12–17, 35–37, 77–79, and asparagine 105 each bind NADP(+); these read GLAVMG, NRT, and VKA. Substrate is bound by residues asparagine 105 and 131–133; that span reads SGG. The active-site Proton acceptor is lysine 187. 190-191 is a binding site for substrate; sequence HN. Glutamate 194 serves as the catalytic Proton donor. Positions 195, 266, 293, 456, and 462 each coordinate substrate.

The protein belongs to the 6-phosphogluconate dehydrogenase family. In terms of assembly, homodimer.

The enzyme catalyses 6-phospho-D-gluconate + NADP(+) = D-ribulose 5-phosphate + CO2 + NADPH. It participates in carbohydrate degradation; pentose phosphate pathway; D-ribulose 5-phosphate from D-glucose 6-phosphate (oxidative stage): step 3/3. Its function is as follows. Catalyzes the oxidative decarboxylation of 6-phosphogluconate to ribulose 5-phosphate and CO(2), with concomitant reduction of NADP to NADPH. The chain is 6-phosphogluconate dehydrogenase, decarboxylating (gnd) from Dictyostelium discoideum (Social amoeba).